The sequence spans 465 residues: Neuraminidase (465 aa).

At 1 to 11 the chain is on the intravirion side; it reads MLPSTIQTLTL. A helical transmembrane segment spans residues 12–34; it reads FLTSGGVLLSLYVSASLSYLLYS. The interval 13–35 is involved in apical transport and lipid raft association; the sequence is LTSGGVLLSLYVSASLSYLLYSD. The Virion surface segment spans residues 35–465; the sequence is DILLKFSSKI…DTVTGVDMAL (431 aa). The segment at 38–85 is hypervariable stalk region; the sequence is LKFSSKITAPTMTLDCANASNVQAVNRSATKEMTFLLPEPEWTYPRLS. Asn-55 and Asn-63 each carry an N-linked (GlcNAc...) asparagine; by host glycan. Cystine bridges form between Cys-86-Cys-419, Cys-121-Cys-126, Cys-181-Cys-228, Cys-230-Cys-235, Cys-276-Cys-290, Cys-278-Cys-288, Cys-317-Cys-336, and Cys-423-Cys-446. A head of neuraminidase region spans residues 88–465; that stretch reads GSTFQKALLI…DTVTGVDMAL (378 aa). Arg-115 contributes to the substrate binding site. N-linked (GlcNAc...) asparagine; by host glycosylation occurs at Asn-143. The active-site Proton donor/acceptor is the Asp-148. Arg-149 is a substrate binding site. A substrate-binding site is contributed by 274–275; that stretch reads EE. An N-linked (GlcNAc...) asparagine; by host glycan is attached at Asn-283. Arg-291 contacts substrate. Ca(2+)-binding residues include Asp-292, Thr-296, Asp-323, Gly-343, and Gly-345. Arg-373 is a binding site for substrate. Catalysis depends on Tyr-408, which acts as the Nucleophile.

Belongs to the glycosyl hydrolase 34 family. Homotetramer. Ca(2+) serves as cofactor. Post-translationally, N-glycosylated.

The protein resides in the virion membrane. It localises to the host apical cell membrane. It carries out the reaction Hydrolysis of alpha-(2-&gt;3)-, alpha-(2-&gt;6)-, alpha-(2-&gt;8)- glycosidic linkages of terminal sialic acid residues in oligosaccharides, glycoproteins, glycolipids, colominic acid and synthetic substrates.. With respect to regulation, inhibited by the neuraminidase inhibitors zanamivir (Relenza) and oseltamivir (Tamiflu). These drugs interfere with the release of progeny virus from infected cells and are effective against all influenza strains. Resistance to neuraminidase inhibitors is quite rare. Functionally, catalyzes the removal of terminal sialic acid residues from viral and cellular glycoconjugates. Cleaves off the terminal sialic acids on the glycosylated HA during virus budding to facilitate virus release. Additionally helps virus spread through the circulation by further removing sialic acids from the cell surface. These cleavages prevent self-aggregation and ensure the efficient spread of the progeny virus from cell to cell. Otherwise, infection would be limited to one round of replication. Described as a receptor-destroying enzyme because it cleaves a terminal sialic acid from the cellular receptors. May facilitate viral invasion of the upper airways by cleaving the sialic acid moieties on the mucin of the airway epithelial cells. Likely to plays a role in the budding process through its association with lipid rafts during intracellular transport. May additionally display a raft-association independent effect on budding. Plays a role in the determination of host range restriction on replication and virulence. Sialidase activity in late endosome/lysosome traffic seems to enhance virus replication. This chain is Neuraminidase, found in Influenza B virus (strain B/Beijing/1/1987).